A 305-amino-acid chain; its full sequence is Aspartate carbamoyltransferase catalytic subunit (305 aa).

Positions 54 and 55 each coordinate carbamoyl phosphate. Lys83 contributes to the L-aspartate binding site. Residues Arg104, His132, and Gln135 each contribute to the carbamoyl phosphate site. Residues Arg165 and Arg226 each contribute to the L-aspartate site. Leu265 and Pro266 together coordinate carbamoyl phosphate.

Belongs to the aspartate/ornithine carbamoyltransferase superfamily. ATCase family. As to quaternary structure, heterooligomer of catalytic and regulatory chains.

The enzyme catalyses carbamoyl phosphate + L-aspartate = N-carbamoyl-L-aspartate + phosphate + H(+). Its pathway is pyrimidine metabolism; UMP biosynthesis via de novo pathway; (S)-dihydroorotate from bicarbonate: step 2/3. Catalyzes the condensation of carbamoyl phosphate and aspartate to form carbamoyl aspartate and inorganic phosphate, the committed step in the de novo pyrimidine nucleotide biosynthesis pathway. The polypeptide is Aspartate carbamoyltransferase catalytic subunit (Pyrobaculum calidifontis (strain DSM 21063 / JCM 11548 / VA1)).